We begin with the raw amino-acid sequence, 181 residues long: Ribonuclease HII (181 aa).

The RNase H type-2 domain maps to 1-181 (MICGIDEVGR…SLHRKSFQLI (181 aa)). 3 residues coordinate a divalent metal cation: Asp6, Glu7, and Asp98.

The protein belongs to the RNase HII family. Mn(2+) is required as a cofactor. The cofactor is Mg(2+).

The protein localises to the cytoplasm. It catalyses the reaction Endonucleolytic cleavage to 5'-phosphomonoester.. Endonuclease that specifically degrades the RNA of RNA-DNA hybrids. In Borrelia duttonii (strain Ly), this protein is Ribonuclease HII.